The primary structure comprises 421 residues: Zinc finger protein 57 (421 aa).

The KRAB domain occupies 15-88 (VSYEDVAVSF…SCTGVFKGGP (74 aa)). The segment at 90–113 (FFCLTCGKCFKKNTFLFNHQFPVR) adopts a C2H2-type 1; degenerate zinc-finger fold. C2H2-type zinc fingers lie at residues 140-162 (FFCN…RRAH) and 168-190 (RSCP…LKVH). Residues 191–221 (QNKPAASNQAGNQASNQRLKSRVPPTTPRSQ) form a disordered region. Positions 195–207 (AASNQAGNQASNQ) are enriched in low complexity. The segment at 264-286 (ISCPYCHITFTMRTCLLTHLKIH) adopts a C2H2-type 4 zinc-finger fold. The segment at 313–332 (YTCPVCDSSFRGKESLLDHL) adopts a C2H2-type 5; degenerate zinc-finger fold. Residues 371–421 (GKRMESRRRRRKRACTENPETEGLSGKGRVAPWEMEGATSPESPVTEEDSD) are disordered.

Belongs to the krueppel C2H2-type zinc-finger protein family. Expressed in oocytes and in a subset of adult tissues. Expressed at high levels in testis, and at low levels in cerebellum. Present in sciatic nerve and spinal cord (at protein level).

The protein localises to the nucleus. In terms of biological role, transcription regulator required to maintain maternal and paternal gene imprinting, a process by which gene expression is restricted in a parent of origin-specific manner by epigenetic modification of genomic DNA and chromatin, including DNA methylation. Acts by controlling DNA methylation during the earliest multicellular stages of development at multiple imprinting control regions (ICRs). Acts together with ZNF445, but ZFP57 plays the predominant role in imprinting maintenance. In contrast, in humans, ZNF445 seems to be the major factor early embryonic imprinting maintenance. Required for the establishment of maternal methylation imprints at SNRPN locus. Acts as a transcriptional repressor in Schwann cells. Binds to a 5'-TGCCGC-3' consensus sequence and recognizes the methylated CpG within this element. The sequence is that of Zinc finger protein 57 (Zfp57) from Mus musculus (Mouse).